The chain runs to 605 residues: Cystathionine gamma-synthase-like enzyme iboG1 (605 aa).

A substrate-binding site is contributed by tyrosine 289. An N6-(pyridoxal phosphate)lysine modification is found at lysine 393.

This sequence belongs to the trans-sulfuration enzymes family. Pyridoxal 5'-phosphate serves as cofactor.

The protein operates within secondary metabolite biosynthesis. Functionally, cystathionine gamma-synthase-like enzyme; part of the gene cluster that mediates the biosynthesis of the psychoactive metabolites ibotenic acid and muscimol. The first committed step is glutamate hydroxylation by the 2-oxoglutarate-dependent dioxygenase iboH, and the last step is decarboxylation of ibotenic acid to muscimol by the decarboxylase iboD. The order of the intermediate reactions is somewhat ambiguous. IboA likely activates the carboxylic acid at position 5 to introduce an amide bond, and the flavin monooxygenase iboF generates the N-O bond. There are several options for the latter step. One option is that iboF directly hydroxylates the amide nitrogen formed by iboA to produce a hydroxamic acid species. Another option is that iboF hydroxylates an external N-containing compound, whose resulting N-O bond is subsequently introduced into the hydroxyglutamate scaffold. The paralogous PLP-dependent cystathionine gamma-synthase-like enzymes iboG1 and iboG2 are likely involved in substitution of the OH group at position 3 by the O-N moiety. The first cyclic intermediate is most probably tricholomic acid which is likely desaturated to ibotenic acid by the cytochrome P450 monooxygenase iboC. In Amanita muscaria (strain Koide BX008), this protein is Cystathionine gamma-synthase-like enzyme iboG1 (iboG1).